The sequence spans 146 residues: Putative ankyrin repeat protein FPV224 (146 aa).

ANK repeat units follow at residues 9–38 (SLST…DASI), 42–79 (KGIT…TRDI), 94–126 (YVFV…RIDE), and 127–145 (YYYS…KAVN).

The protein is Putative ankyrin repeat protein FPV224 of Fowlpox virus (strain NVSL) (FPV).